Here is a 464-residue protein sequence, read N- to C-terminus: Argininosuccinate lyase (464 aa).

This sequence belongs to the lyase 1 family. Argininosuccinate lyase subfamily.

It is found in the cytoplasm. The catalysed reaction is 2-(N(omega)-L-arginino)succinate = fumarate + L-arginine. The protein operates within amino-acid biosynthesis; L-arginine biosynthesis; L-arginine from L-ornithine and carbamoyl phosphate: step 3/3. The chain is Argininosuccinate lyase from Stutzerimonas stutzeri (strain A1501) (Pseudomonas stutzeri).